Here is a 442-residue protein sequence, read N- to C-terminus: F-box protein KIB2 (442 aa).

Residues 62–109 (SKQPVLVLDLLRSILERLSFVDFHRGRCISLEWYSASESCLAVKNPTS) enclose the F-box domain. Residues 236-243 (HKKGDENY) carry the Nuclear localization signal motif.

As to quaternary structure, interacts with ASK7/BIN2/SK21.

It is found in the cytoplasm. Its subcellular location is the nucleus. The protein resides in the nucleolus. Component of SCF(ASK-cullin-F-box) E3 ubiquitin ligase complexes, which may mediate the ubiquitination and subsequent proteasomal degradation of target proteins. Required for brassinosteroid (BR) signal transduction. Mediates ASK7/BIN2/SK21 inactivation both by competing with substrate binding (e.g. BZR1) and by promoting its ubiquitination and subsequent proteasomal degradation. The chain is F-box protein KIB2 from Arabidopsis thaliana (Mouse-ear cress).